Here is a 256-residue protein sequence, read N- to C-terminus: 5-oxoprolinase subunit A (256 aa).

The protein belongs to the LamB/PxpA family. Forms a complex composed of PxpA, PxpB and PxpC.

The enzyme catalyses 5-oxo-L-proline + ATP + 2 H2O = L-glutamate + ADP + phosphate + H(+). Catalyzes the cleavage of 5-oxoproline to form L-glutamate coupled to the hydrolysis of ATP to ADP and inorganic phosphate. This Azoarcus sp. (strain BH72) protein is 5-oxoprolinase subunit A.